Here is a 100-residue protein sequence, read N- to C-terminus: MKKVLFLVVALASFAFGADGEQIKAFSVVAAGIGLGVAALGGAIGMGHTAAATILGTARNPGLGGKLLTTMFIALAMIEAQVIYALVIALIALYANPFLG.

The next 2 helical transmembrane spans lie at 26 to 46 and 71 to 91; these read FSVV…AIGM and MFIA…IALI.

The protein belongs to the ATPase C chain family. In terms of assembly, F-type ATPases have 2 components, F(1) - the catalytic core - and F(0) - the membrane proton channel. F(1) has five subunits: alpha(3), beta(3), gamma(1), delta(1), epsilon(1). F(0) has three main subunits: a(1), b(2) and c(10-14). The alpha and beta chains form an alternating ring which encloses part of the gamma chain. F(1) is attached to F(0) by a central stalk formed by the gamma and epsilon chains, while a peripheral stalk is formed by the delta and b chains.

The protein resides in the cell inner membrane. Functionally, f(1)F(0) ATP synthase produces ATP from ADP in the presence of a proton or sodium gradient. F-type ATPases consist of two structural domains, F(1) containing the extramembraneous catalytic core and F(0) containing the membrane proton channel, linked together by a central stalk and a peripheral stalk. During catalysis, ATP synthesis in the catalytic domain of F(1) is coupled via a rotary mechanism of the central stalk subunits to proton translocation. Key component of the F(0) channel; it plays a direct role in translocation across the membrane. A homomeric c-ring of between 10-14 subunits forms the central stalk rotor element with the F(1) delta and epsilon subunits. The protein is ATP synthase subunit c of Campylobacter fetus subsp. fetus (strain 82-40).